The primary structure comprises 180 residues: Adenine phosphoribosyltransferase (180 aa).

This sequence belongs to the purine/pyrimidine phosphoribosyltransferase family. Homodimer.

It is found in the cytoplasm. The enzyme catalyses AMP + diphosphate = 5-phospho-alpha-D-ribose 1-diphosphate + adenine. The protein operates within purine metabolism; AMP biosynthesis via salvage pathway; AMP from adenine: step 1/1. In terms of biological role, catalyzes a salvage reaction resulting in the formation of AMP, that is energically less costly than de novo synthesis. The sequence is that of Adenine phosphoribosyltransferase from Pasteurella multocida (strain Pm70).